A 204-amino-acid chain; its full sequence is Regulatory protein RecX (204 aa).

The segment covering 1 to 22 (MTKSSRPQSISDSVSVAGSQGT) has biased composition (polar residues). The disordered stretch occupies residues 1-44 (MTKSSRPQSISDSVSVAGSQGTLDDLRARVASVPEAPTREPVDS).

Belongs to the RecX family.

Its subcellular location is the cytoplasm. Functionally, modulates RecA activity. This is Regulatory protein RecX from Mycobacteroides abscessus (strain ATCC 19977 / DSM 44196 / CCUG 20993 / CIP 104536 / JCM 13569 / NCTC 13031 / TMC 1543 / L948) (Mycobacterium abscessus).